Consider the following 217-residue polypeptide: Probable GTP-binding protein EngB (217 aa).

An EngB-type G domain is found at 33-217; the sequence is GPTEIAFAGR…RAAIELAVTR (185 aa). GTP contacts are provided by residues 41–48, 68–72, 95–98, 162–165, and 196–198; these read GRSNVGKS, GRTQE, DMPG, TKTD, and TSS. Mg(2+)-binding residues include S48 and T70.

It belongs to the TRAFAC class TrmE-Era-EngA-EngB-Septin-like GTPase superfamily. EngB GTPase family. It depends on Mg(2+) as a cofactor.

Its function is as follows. Necessary for normal cell division and for the maintenance of normal septation. The polypeptide is Probable GTP-binding protein EngB (Rhizobium meliloti (strain 1021) (Ensifer meliloti)).